The sequence spans 384 residues: GTPase Obg (384 aa).

The Obg domain maps to 1–159 (MKFIDEAKIE…RSLQLELKVL (159 aa)). Disordered stretches follow at residues 20-46 (ATSFRREKFVPRGGPDGGDGGKGGSVW) and 129-149 (HFKSSVNRAPKQSTPGEEGET). The segment covering 33-43 (GPDGGDGGKGG) has biased composition (gly residues). Over residues 130–143 (FKSSVNRAPKQSTP) the composition is skewed to polar residues. In terms of domain architecture, OBG-type G spans 160–348 (ADVGLLGMPN…LVHQINQYLA (189 aa)). GTP-binding positions include 166–173 (GMPNAGKS), 191–195 (FTTLH), 213–216 (DIPG), 284–287 (NKLD), and 329–331 (SAL). Mg(2+) contacts are provided by S173 and T193.

It belongs to the TRAFAC class OBG-HflX-like GTPase superfamily. OBG GTPase family. As to quaternary structure, monomer. The cofactor is Mg(2+).

The protein resides in the cytoplasm. Its function is as follows. An essential GTPase which binds GTP, GDP and possibly (p)ppGpp with moderate affinity, with high nucleotide exchange rates and a fairly low GTP hydrolysis rate; the half-life of the GTP-bound state is about 50 minutes. Plays a role in control of the cell cycle, stress response, ribosome biogenesis and in those bacteria that undergo differentiation, in morphogenesis control. The protein is GTPase Obg of Neisseria gonorrhoeae (strain ATCC 700825 / FA 1090).